The following is a 404-amino-acid chain: Pyrophosphate--fructose 6-phosphate 1-phosphotransferase (404 aa).

Glycine 12 provides a ligand contact to diphosphate. A Mg(2+)-binding site is contributed by aspartate 121. Substrate contacts are provided by residues 149–151 (TID), 194–196 (MGR), glutamate 266, and 323–326 (YFSR). The Proton acceptor role is filled by aspartate 151.

The protein belongs to the phosphofructokinase type A (PFKA) family. PPi-dependent PFK group II subfamily. Clade 'P' sub-subfamily. As to quaternary structure, homodimer. Requires Mg(2+) as cofactor.

The protein resides in the cytoplasm. It catalyses the reaction beta-D-fructose 6-phosphate + diphosphate = beta-D-fructose 1,6-bisphosphate + phosphate + H(+). It participates in carbohydrate degradation; glycolysis; D-glyceraldehyde 3-phosphate and glycerone phosphate from D-glucose: step 3/4. With respect to regulation, non-allosteric. Catalyzes the phosphorylation of D-fructose 6-phosphate, the first committing step of glycolysis. Uses inorganic phosphate (PPi) as phosphoryl donor instead of ATP like common ATP-dependent phosphofructokinases (ATP-PFKs), which renders the reaction reversible, and can thus function both in glycolysis and gluconeogenesis. Consistently, PPi-PFK can replace the enzymes of both the forward (ATP-PFK) and reverse (fructose-bisphosphatase (FBPase)) reactions. This is Pyrophosphate--fructose 6-phosphate 1-phosphotransferase from Propionibacterium freudenreichii subsp. shermanii (strain ATCC 9614 / DSM 4902 / CIP 103027 / NCIMB 8099 / CIRM-BIA1).